The primary structure comprises 73 residues: Translation initiation factor IF-1 (73 aa).

Residues 1–72 (MAKDDVIEVE…TKGRITYRFI (72 aa)) enclose the S1-like domain.

The protein belongs to the IF-1 family. As to quaternary structure, component of the 30S ribosomal translation pre-initiation complex which assembles on the 30S ribosome in the order IF-2 and IF-3, IF-1 and N-formylmethionyl-tRNA(fMet); mRNA recruitment can occur at any time during PIC assembly.

The protein localises to the cytoplasm. Its function is as follows. One of the essential components for the initiation of protein synthesis. Stabilizes the binding of IF-2 and IF-3 on the 30S subunit to which N-formylmethionyl-tRNA(fMet) subsequently binds. Helps modulate mRNA selection, yielding the 30S pre-initiation complex (PIC). Upon addition of the 50S ribosomal subunit IF-1, IF-2 and IF-3 are released leaving the mature 70S translation initiation complex. In Lactobacillus acidophilus (strain ATCC 700396 / NCK56 / N2 / NCFM), this protein is Translation initiation factor IF-1.